We begin with the raw amino-acid sequence, 245 residues long: MLIIPAIDLKDGACVRLRQGRMEDSTVFSDDPVSMAAKWVEGGCRRLHLVDLNGAFEGQPVNGEVVTAIAKRYPTLPIQIGGGIRSLDTIEHYVKAGVSYVIIGTKAVKQPEFVAEACKAFPGKVIVGLDAKDGFVATDGWAEVSSVQVIDLAKRFEADGVSAIVYTDIAKDGMMQGCNVPFTKALAEATRIPVIASGGIHNLGDIKALLDAKAPGIVGAITGRAIYEGTLDVAEAQAFCDNYQG.

Asp8 serves as the catalytic Proton acceptor. Asp130 (proton donor) is an active-site residue.

Belongs to the HisA/HisF family.

Its subcellular location is the cytoplasm. It catalyses the reaction 1-(5-phospho-beta-D-ribosyl)-5-[(5-phospho-beta-D-ribosylamino)methylideneamino]imidazole-4-carboxamide = 5-[(5-phospho-1-deoxy-D-ribulos-1-ylimino)methylamino]-1-(5-phospho-beta-D-ribosyl)imidazole-4-carboxamide. Its pathway is amino-acid biosynthesis; L-histidine biosynthesis; L-histidine from 5-phospho-alpha-D-ribose 1-diphosphate: step 4/9. This is 1-(5-phosphoribosyl)-5-[(5-phosphoribosylamino)methylideneamino] imidazole-4-carboxamide isomerase from Pseudomonas putida (strain GB-1).